Reading from the N-terminus, the 338-residue chain is Ketol-acid reductoisomerase (NADP(+)) (338 aa).

Positions 1-181 (MKVFYDKDCD…GGGRTGIIET (181 aa)) constitute a KARI N-terminal Rossmann domain. Residues 24–27 (YGSQ), Arg-47, Ser-50, Thr-52, and 82–85 (DEFQ) contribute to the NADP(+) site. Residue His-107 is part of the active site. Gly-133 is an NADP(+) binding site. One can recognise a KARI C-terminal knotted domain in the interval 182–327 (TFKDETETDL…EQLRSMMPWI (146 aa)). 4 residues coordinate Mg(2+): Asp-190, Glu-194, Glu-226, and Glu-230. Position 251 (Ser-251) interacts with substrate.

It belongs to the ketol-acid reductoisomerase family. The cofactor is Mg(2+).

The catalysed reaction is (2R)-2,3-dihydroxy-3-methylbutanoate + NADP(+) = (2S)-2-acetolactate + NADPH + H(+). It catalyses the reaction (2R,3R)-2,3-dihydroxy-3-methylpentanoate + NADP(+) = (S)-2-ethyl-2-hydroxy-3-oxobutanoate + NADPH + H(+). Its pathway is amino-acid biosynthesis; L-isoleucine biosynthesis; L-isoleucine from 2-oxobutanoate: step 2/4. The protein operates within amino-acid biosynthesis; L-valine biosynthesis; L-valine from pyruvate: step 2/4. Functionally, involved in the biosynthesis of branched-chain amino acids (BCAA). Catalyzes an alkyl-migration followed by a ketol-acid reduction of (S)-2-acetolactate (S2AL) to yield (R)-2,3-dihydroxy-isovalerate. In the isomerase reaction, S2AL is rearranged via a Mg-dependent methyl migration to produce 3-hydroxy-3-methyl-2-ketobutyrate (HMKB). In the reductase reaction, this 2-ketoacid undergoes a metal-dependent reduction by NADPH to yield (R)-2,3-dihydroxy-isovalerate. The protein is Ketol-acid reductoisomerase (NADP(+)) of Pseudomonas putida (strain ATCC 700007 / DSM 6899 / JCM 31910 / BCRC 17059 / LMG 24140 / F1).